The sequence spans 514 residues: 2-isopropylmalate synthase (514 aa).

In terms of domain architecture, Pyruvate carboxyltransferase spans 5 to 268; that stretch reads LIIFDTTLRD…DVGIDTTQIV (264 aa). Mn(2+) contacts are provided by Asp14, His202, His204, and Asn239. The regulatory domain stretch occupies residues 395–514; the sequence is KFVSLSQHSE…KDDKLNPQRA (120 aa).

The protein belongs to the alpha-IPM synthase/homocitrate synthase family. LeuA type 1 subfamily. As to quaternary structure, homodimer. It depends on Mn(2+) as a cofactor.

It localises to the cytoplasm. It carries out the reaction 3-methyl-2-oxobutanoate + acetyl-CoA + H2O = (2S)-2-isopropylmalate + CoA + H(+). Its pathway is amino-acid biosynthesis; L-leucine biosynthesis; L-leucine from 3-methyl-2-oxobutanoate: step 1/4. In terms of biological role, catalyzes the condensation of the acetyl group of acetyl-CoA with 3-methyl-2-oxobutanoate (2-ketoisovalerate) to form 3-carboxy-3-hydroxy-4-methylpentanoate (2-isopropylmalate). The sequence is that of 2-isopropylmalate synthase from Burkholderia vietnamiensis (strain G4 / LMG 22486) (Burkholderia cepacia (strain R1808)).